Here is a 283-residue protein sequence, read N- to C-terminus: Adenosyl-chloride synthase (283 aa).

Residues aspartate 11, 70–72, and 128–131 contribute to the substrate site; these read YVY and TWYG. Glycine 131 contributes to the chloride binding site.

This sequence belongs to the SAM hydrolase / SAM-dependent halogenase family. In terms of assembly, homotrimer.

It carries out the reaction chloride + S-adenosyl-L-methionine = 5'-chloro-5'-deoxyadenosine + L-methionine. Functionally, involved in the biosynthesis of the proteosome inhibitor salinosporamide A (SalA). Catalyzes the halogenation of S-adenosyl-L-methionine (SAM) with chloride to generate 5'-chloro-5'-deoxyadenosine (5'-CIDA) and L-methionine. It can also use bromide and iodide, producing halogenated 5'-deoxyadenosine (5'-XDA) and L-methionine, however no halogenase activity is detected in the presence of fluoride. The protein is Adenosyl-chloride synthase of Salinispora tropica (strain ATCC BAA-916 / DSM 44818 / JCM 13857 / NBRC 105044 / CNB-440).